The chain runs to 68 residues: uncharacterized protein (68 aa).

A disordered region spans residues 1–68 (METIIRRFSP…GNSKNIKTKK (68 aa)). Residues 9–34 (SPKEKEKEKEKEEKDEKSKDKKEPIK) show a composition bias toward basic and acidic residues. Residues 42–51 (DEEEEEDEQE) show a composition bias toward acidic residues.

This is an uncharacterized protein from Dictyostelium discoideum (Social amoeba).